The chain runs to 484 residues: Phospholipase A1-Ialpha2, chloroplastic (484 aa).

The transit peptide at 1 to 63 directs the protein to the chloroplast; it reads MALIQNPNMK…LAPVILNSPV (63 aa). The short motif at 295–299 is the GXSXG element; sequence GHSMG. Ser297 serves as the catalytic Acyl-ester intermediate. Residues Asp360 and His411 each act as charge relay system in the active site.

It belongs to the AB hydrolase superfamily. Lipase family. In terms of tissue distribution, ubiquitous. Highest expression in flowers and leaves.

The protein resides in the plastid. It localises to the chloroplast. Its subcellular location is the plastoglobule. The enzyme catalyses a 1,2-diacyl-3-O-[alpha-D-galactosyl-(1-&gt;6)-beta-D-galactosyl]-sn-glycerol + H2O = acyl-3-O-[alpha-D-galactosyl-(1-&gt;6)-beta-D-galactosyl]-sn-glycerol + a fatty acid + H(+). It catalyses the reaction a 1,2-diacyl-3-O-(beta-D-galactosyl)-sn-glycerol + H2O = an acyl-3-O-(beta-D-galactosyl)-sn-glycerol + a fatty acid + H(+). Functionally, acylhydrolase that catalyzes the hydrolysis of phosphatidylcholine at the sn-1 position. Has a strong galactolipase activity toward monogalactosyldiacylglycerol (MGDG) and digalactosyldiacylglycerol (DGDG). Low triacylglycerol (TAG) lipase activity. Plays a role in plant growth and in leaf senescence. This Arabidopsis thaliana (Mouse-ear cress) protein is Phospholipase A1-Ialpha2, chloroplastic.